The chain runs to 248 residues: Triosephosphate isomerase (248 aa).

9–11 (NWK) lines the substrate pocket. The Electrophile role is filled by His95. Glu166 serves as the catalytic Proton acceptor. Substrate is bound by residues Gly172, Ser210, and 231-232 (GG).

It belongs to the triosephosphate isomerase family. Homodimer.

The protein resides in the cytoplasm. The catalysed reaction is D-glyceraldehyde 3-phosphate = dihydroxyacetone phosphate. The protein operates within carbohydrate biosynthesis; gluconeogenesis. Its pathway is carbohydrate degradation; glycolysis; D-glyceraldehyde 3-phosphate from glycerone phosphate: step 1/1. Functionally, involved in the gluconeogenesis. Catalyzes stereospecifically the conversion of dihydroxyacetone phosphate (DHAP) to D-glyceraldehyde-3-phosphate (G3P). This is Triosephosphate isomerase from Delftia acidovorans (strain DSM 14801 / SPH-1).